The following is a 308-amino-acid chain: Lysophosphatidic acid receptor 6 (308 aa).

Residues 1 to 16 (MVSSNCSTEDSFKYTL) lie on the Extracellular side of the membrane. Residue Asn5 is glycosylated (N-linked (GlcNAc...) asparagine). The helical transmembrane segment at 17 to 43 (YGCVFSMVFVLGLIANCVAIYIFTFTL) threads the bilayer. Residues 44–52 (KVRNETTTY) lie on the Cytoplasmic side of the membrane. Residues 53 to 76 (MLNLAISDLLFVFTLPFRIYYFVV) traverse the membrane as a helical segment. The Extracellular segment spans residues 77–89 (RNWPFGDVLCKIS). An intrachain disulfide couples Cys86 to Cys165. Residues 90-109 (VTLFYTNMYGSILFLTCISV) traverse the membrane as a helical segment. At 110-130 (DRFLAIVHPFRSKTLRTKRNA) the chain is on the cytoplasmic side. Residues 131–151 (RIVCVAVWITVLAGSTPASFF) form a helical membrane-spanning segment. Residues 152 to 178 (QSTNRQNNTEQRTCFENFPESTWKTYL) lie on the Extracellular side of the membrane. Residues 179-206 (SRIVIFIEIVGFFIPLILNVTCSTMVLR) form a helical membrane-spanning segment. The Cytoplasmic portion of the chain corresponds to 207-224 (TLNKPLTLSRNKLSKKKV). A helical transmembrane segment spans residues 225-250 (LKMIFVHLVIFCFCFVPYNITLILYS). Over 251–269 (LMRTQTWINCSVVTAVRTM) the chain is Extracellular. Residues 270-289 (YPVTLCIAVSNCCFDPIVYY) form a helical membrane-spanning segment. The S-palmitoyl cysteine moiety is linked to residue Cys281. The Cytoplasmic segment spans residues 290–308 (FTSDTNSELDKKQQVHQNT).

Belongs to the G-protein coupled receptor 1 family. In terms of tissue distribution, induced in activated T-cells.

Its subcellular location is the cell membrane. Functionally, binds to oleoyl-L-alpha-lysophosphatidic acid (LPA). Intracellular cAMP is involved in the receptor activation. This chain is Lysophosphatidic acid receptor 6 (LPAR6), found in Gallus gallus (Chicken).